The following is a 173-amino-acid chain: uncharacterized protein (173 aa).

The segment covering 1–11 has biased composition (basic and acidic residues); sequence MLCAKNKKDPK. The tract at residues 1–173 is disordered; that stretch reads MLCAKNKKDP…EKMEKSEKAY (173 aa). The span at 17–41 shows a compositional bias: polar residues; it reads FSETSKVQNVQNTQPKPAAPSQMSI. Composition is skewed to basic and acidic residues over residues 56-109 and 120-144; these read KSVE…KADN and AKKE…EAKK. The span at 145-156 shows a compositional bias: basic residues; sequence KESRRQKKMRNK. The span at 157 to 173 shows a compositional bias: basic and acidic residues; it reads NSKEGSVEKMEKSEKAY.

This is an uncharacterized protein from Caenorhabditis elegans.